Here is a 183-residue protein sequence, read N- to C-terminus: Dual-action ribosomal maturation protein DarP (183 aa).

This sequence belongs to the DarP family.

It is found in the cytoplasm. Member of a network of 50S ribosomal subunit biogenesis factors which assembles along the 30S-50S interface, preventing incorrect 23S rRNA structures from forming. Promotes peptidyl transferase center (PTC) maturation. The protein is Dual-action ribosomal maturation protein DarP of Shigella boydii serotype 18 (strain CDC 3083-94 / BS512).